A 160-amino-acid chain; its full sequence is Cytochrome c-type biogenesis protein CcmE (160 aa).

Residues 1-9 (MRGLKKKRR) are Cytoplasmic-facing. A helical; Signal-anchor for type II membrane protein transmembrane segment spans residues 10 to 30 (IQIIAIAAVALTIATIMIGTA). Residues 31–160 (MRDGINFFRS…DGGYGGASGS (130 aa)) lie on the Periplasmic side of the membrane. Residues His-123 and Tyr-127 each contribute to the heme site. The tract at residues 141 to 160 (VYKDPNATDADGGYGGASGS) is disordered.

Belongs to the CcmE/CycJ family.

The protein localises to the cell inner membrane. In terms of biological role, heme chaperone required for the biogenesis of c-type cytochromes. Transiently binds heme delivered by CcmC and transfers the heme to apo-cytochromes in a process facilitated by CcmF and CcmH. In Dinoroseobacter shibae (strain DSM 16493 / NCIMB 14021 / DFL 12), this protein is Cytochrome c-type biogenesis protein CcmE.